The sequence spans 344 residues: Methionine import ATP-binding protein MetN (344 aa).

The ABC transporter domain occupies 2–241 (IELQGLSQRF…PQHEVTRAMI (240 aa)). Residue 38 to 45 (GRSGAGKS) coordinates ATP.

It belongs to the ABC transporter superfamily. Methionine importer (TC 3.A.1.24) family. As to quaternary structure, the complex is composed of two ATP-binding proteins (MetN), two transmembrane proteins (MetI) and a solute-binding protein (MetQ).

The protein resides in the cell inner membrane. The catalysed reaction is L-methionine(out) + ATP + H2O = L-methionine(in) + ADP + phosphate + H(+). It carries out the reaction D-methionine(out) + ATP + H2O = D-methionine(in) + ADP + phosphate + H(+). Part of the ABC transporter complex MetNIQ involved in methionine import. Responsible for energy coupling to the transport system. The polypeptide is Methionine import ATP-binding protein MetN (Cupriavidus pinatubonensis (strain JMP 134 / LMG 1197) (Cupriavidus necator (strain JMP 134))).